Reading from the N-terminus, the 344-residue chain is Ras association domain-containing protein 1 (344 aa).

Ser-2 carries the post-translational modification N-acetylserine. Ser-2 is subject to Phosphoserine. The segment at 2–119 is mediates interaction with E4F1; sequence SGEPELIELR…DLGWEPAVER (118 aa). Arg-36 carries the omega-N-methylarginine modification. A Phorbol-ester/DAG-type zinc finger spans residues 51–105; sequence GHRFQPAGPATHTWCDLCGDFIWGVVRKGLQCARLSADCKFTCHYRCRALVCLDC. Over residues 179 to 189 the composition is skewed to low complexity; it reads SVPSSKKPPSL. Residues 179 to 203 are disordered; it reads SVPSSKKPPSLQDARRGPGRGTSVR. The 95-residue stretch at 198–292 folds into the Ras-associating domain; sequence RGTSVRRRTS…LSFVLKENDS (95 aa). The 48-residue stretch at 294-341 folds into the SARAH domain; it reads EVNWDAFSMPELHNFLRILQREEEEHLRQILQKYSYCRQKIQEALHAC. The segment at 315 to 318 is MOAP1-binding; it reads EEEE.

In terms of assembly, interacts with MAP1S. Interacts with XPA. Binds to the N-terminal of CDC20 during prometaphase. Binds to STK3/MST2 and STK4/MST1. Recruited to the TNFRSF1A and TNFRSF10A complexes in response to their respective cognate ligand, after internalization. Can self-associate. Part of a complex with MDM2, DAXX, RASSF1 and USP7. Interacts with ECM2. As to quaternary structure, interacts with MOAP1. Interacts with E4F1. Interacts with RSSF5 and probably associates with HRAS via a RSSF1 isoform A-RSSF5 heterodimer. Interacts (via C-terminus) with DAXX (via N-terminus); the interaction is independent of MDM2 and TP53. Interacts (via N-terminus) with MDM2 (via C-terminus); the interaction is independent of TP53. Interacts with RAB39A. Interacts with RAB39B; the interaction is weak. Interacts (via N-terminus) with DAXX. Interacts with RAB39B; the interaction is strong. Does not interact with RAB39A. In terms of assembly, interacts (via N-terminus) with DAXX. Isoform A and isoform C are ubiquitously expressed in all tissues tested, however isoform A is absent in many corresponding cancer cell lines. Isoform B is mainly expressed in hematopoietic cells.

It localises to the cytoplasm. It is found in the cytoskeleton. The protein resides in the microtubule organizing center. Its subcellular location is the centrosome. The protein localises to the spindle. It localises to the spindle pole. It is found in the nucleus. Potential tumor suppressor. Required for death receptor-dependent apoptosis. Mediates activation of STK3/MST2 and STK4/MST1 during Fas-induced apoptosis by preventing their dephosphorylation. When associated with MOAP1, promotes BAX conformational change and translocation to mitochondrial membranes in response to TNF and TNFSF10 stimulation. Isoform A interacts with CDC20, an activator of the anaphase-promoting complex, APC, resulting in the inhibition of APC activity and mitotic progression. Inhibits proliferation by negatively regulating cell cycle progression at the level of G1/S-phase transition by regulating accumulation of cyclin D1 protein. Isoform C has been shown not to perform these roles, no function has been identified for this isoform. Isoform A disrupts interactions among MDM2, DAXX and USP7, thus contributing to the efficient activation of TP53 by promoting MDM2 self-ubiquitination in cell-cycle checkpoint control in response to DNA damage. This chain is Ras association domain-containing protein 1, found in Homo sapiens (Human).